Here is a 233-residue protein sequence, read N- to C-terminus: Large ribosomal subunit protein uL1 (233 aa).

The protein belongs to the universal ribosomal protein uL1 family. Part of the 50S ribosomal subunit.

Functionally, binds directly to 23S rRNA. The L1 stalk is quite mobile in the ribosome, and is involved in E site tRNA release. Its function is as follows. Protein L1 is also a translational repressor protein, it controls the translation of the L11 operon by binding to its mRNA. The protein is Large ribosomal subunit protein uL1 of Brucella suis (strain ATCC 23445 / NCTC 10510).